Consider the following 569-residue polypeptide: Methionine--tRNA ligase (569 aa).

The short motif at Pro11–Asn21 is the 'HIGH' region element. Zn(2+)-binding residues include Cys143, Cys146, Cys156, and Cys159. Residues Lys342–Ser346 carry the 'KMSKS' region motif. Residue Thr345 coordinates ATP.

It belongs to the class-I aminoacyl-tRNA synthetase family. MetG type 1 subfamily. In terms of assembly, monomer. Zn(2+) is required as a cofactor.

The protein resides in the cytoplasm. The enzyme catalyses tRNA(Met) + L-methionine + ATP = L-methionyl-tRNA(Met) + AMP + diphosphate. Is required not only for elongation of protein synthesis but also for the initiation of all mRNA translation through initiator tRNA(fMet) aminoacylation. The protein is Methionine--tRNA ligase of Caulobacter sp. (strain K31).